The sequence spans 255 residues: Testis-specific H1 histone (255 aa).

The disordered stretch occupies residues 1-54 (MEQALTGEAQSRWPRRGGSGAMAEAPGPSGESRGHSATQLPAEKTVGGPSRGCS). Ser-56 bears the Phosphoserine mark. A compositionally biased stretch (basic residues) spans 124-134 (KVPKPRRKPGR). Residues 124 to 255 (KVPKPRRKPG…PKKPAQRTIQ (132 aa)) form a disordered region. Residues 142–152 (RAPWRTPAAPR) show a composition bias toward low complexity. Basic residues-rich tracts occupy residues 153-166 (SSRR…KAAR) and 174-194 (RNAR…RARP). Composition is skewed to basic and acidic residues over residues 195–230 (RAKE…PRSG) and 238–248 (KPREEKQEPKK).

The protein belongs to the histone H1/H5 family. As to expression, testis-specific.

It localises to the nucleus. It is found in the chromosome. Essential for normal spermatogenesis and male fertility. Required for proper cell restructuring and DNA condensation during the elongation phase of spermiogenesis. Involved in the histone-protamine transition of sperm chromatin and the subsequent production of functional sperm. Binds both double-stranded and single-stranded DNA, ATP and protamine-1. In Homo sapiens (Human), this protein is Testis-specific H1 histone.